Consider the following 277-residue polypeptide: MSSTWYPPPSRPRPVEGGIKARSTRGAIAQTWWSERFIAVLEDIGLGNRLQRGRSYARKGQVISLQVDAGLVTALVQGSRARPYRIRIGIPAFGKSQWAHVERTLAENAWYAAKLLSGEMPEDIEDVFAGLGLSLFPGTARELSLDCSCPDYAVPCKHLAATFYLLAESFDEDPFAILAWRGREREDLLANLAAARADGAAPAADHAEQVAQPLTDCLDRYYARQADINVPSPPATPSTALLDQLPDTGLSARGRPLTELLRPAYHALTHHHNSAGG.

The SWIM-type zinc-finger motif lies at 139 to 167; that stretch reads TARELSLDCSCPDYAVPCKHLAATFYLLA.

This is an uncharacterized protein from Mycobacterium tuberculosis (strain ATCC 25618 / H37Rv).